Consider the following 428-residue polypeptide: Histidine--tRNA ligase (428 aa).

It belongs to the class-II aminoacyl-tRNA synthetase family. As to quaternary structure, homodimer.

The protein resides in the cytoplasm. It catalyses the reaction tRNA(His) + L-histidine + ATP = L-histidyl-tRNA(His) + AMP + diphosphate + H(+). The polypeptide is Histidine--tRNA ligase (Thermosynechococcus vestitus (strain NIES-2133 / IAM M-273 / BP-1)).